We begin with the raw amino-acid sequence, 378 residues long: Chaperone protein DnaJ (378 aa).

The 65-residue stretch at 5–69 folds into the J domain; sequence DYYEVLGVSK…NKRANYDQFG (65 aa). The CR-type zinc finger occupies 135–217; sequence GSEKEISIRK…CHGKGTENKN (83 aa). Positions 148, 151, 165, 168, 191, 194, 205, and 208 each coordinate Zn(2+). 4 CXXCXGXG motif repeats span residues 148–155, 165–172, 191–198, and 205–212; these read CHTCDGEG, CHYCNGSG, CPVCSGSG, and CPTCHGKG.

The protein belongs to the DnaJ family. As to quaternary structure, homodimer. It depends on Zn(2+) as a cofactor.

The protein localises to the cytoplasm. Its function is as follows. Participates actively in the response to hyperosmotic and heat shock by preventing the aggregation of stress-denatured proteins and by disaggregating proteins, also in an autonomous, DnaK-independent fashion. Unfolded proteins bind initially to DnaJ; upon interaction with the DnaJ-bound protein, DnaK hydrolyzes its bound ATP, resulting in the formation of a stable complex. GrpE releases ADP from DnaK; ATP binding to DnaK triggers the release of the substrate protein, thus completing the reaction cycle. Several rounds of ATP-dependent interactions between DnaJ, DnaK and GrpE are required for fully efficient folding. Also involved, together with DnaK and GrpE, in the DNA replication of plasmids through activation of initiation proteins. The chain is Chaperone protein DnaJ from Staphylococcus saprophyticus subsp. saprophyticus (strain ATCC 15305 / DSM 20229 / NCIMB 8711 / NCTC 7292 / S-41).